Consider the following 269-residue polypeptide: Shikimate dehydrogenase (NADP(+)) (269 aa).

Shikimate is bound by residues 13 to 15 and threonine 60; that span reads SLS. The active-site Proton acceptor is the lysine 64. Glutamate 76 is an NADP(+) binding site. Residues asparagine 85 and aspartate 100 each contribute to the shikimate site. NADP(+)-binding positions include 124–128, 148–153, and isoleucine 209; these read GAGGA and NRTMSR. Tyrosine 211 lines the shikimate pocket. Glycine 232 provides a ligand contact to NADP(+). Glutamine 239 serves as a coordination point for shikimate.

This sequence belongs to the shikimate dehydrogenase family. As to quaternary structure, monomer or homodimer.

It catalyses the reaction shikimate + NADP(+) = 3-dehydroshikimate + NADPH + H(+). It functions in the pathway metabolic intermediate biosynthesis; chorismate biosynthesis; chorismate from D-erythrose 4-phosphate and phosphoenolpyruvate: step 4/7. Functionally, involved in the biosynthesis of the chorismate, which leads to the biosynthesis of aromatic amino acids. Catalyzes the reversible NADPH linked reduction of 3-dehydroshikimate (DHSA) to yield shikimate (SA). It can also use NAD to oxidize shikimate. The chain is Shikimate dehydrogenase (NADP(+)) from Staphylococcus epidermidis (strain ATCC 35984 / DSM 28319 / BCRC 17069 / CCUG 31568 / BM 3577 / RP62A).